The sequence spans 385 residues: Probable di-N-acetylchitobiase 2 (385 aa).

The N-terminal stretch at 1–15 (MRIILLLFLIVFVVA) is a signal peptide. Residues 16 to 377 (QSSSSSSSSG…DALASFFPQS (362 aa)) enclose the GH18 domain. N-linked (GlcNAc...) asparagine glycans are attached at residues Asn-51 and Asn-101. The Proton donor role is filled by Glu-129. 3 N-linked (GlcNAc...) asparagine glycosylation sites follow: Asn-223, Asn-272, and Asn-296.

It belongs to the glycosyl hydrolase 18 family.

Its subcellular location is the lysosome. Its function is as follows. Involved in the degradation of asparagine-linked glycoproteins. May hydrolyze of N-acetyl-beta-D-glucosamine (1-4)N-acetylglucosamine chitobiose core from the reducing end of the bond. The sequence is that of Probable di-N-acetylchitobiase 2 (ctbs2) from Dictyostelium discoideum (Social amoeba).